The following is a 290-amino-acid chain: MMRIMLFLATNLAVLIIASITLKLLGVDRFTGQNHGSLLIFCAVFGFAGSLVSLFISKWMAKMSTGTQIITQPRTRHEQWLLQTVEELSREAGIKMPEVGIFPAYESNAFATGWNKNDALVAVSQGLLERFSPDEVRAVLAHEIGHVANGDMVTLALIQGVVNTFVMFFARIFGSFVDKAIFKNEDGHGIGYFIATIFAELVLGILASIIVMWFSRKREFKADEAGARLAGTGAMIAALQRLRAEQGVPVQMPDSLTAFGINGGLKNGLAGLLMTHPPLEDRIEALRRLG.

2 helical membrane passes run 4-24 (IMLF…TLKL) and 36-56 (GSLL…SLFI). H142 lines the Zn(2+) pocket. E143 is an active-site residue. H146 provides a ligand contact to Zn(2+). Helical transmembrane passes span 150–170 (GDMV…MFFA) and 193–213 (FIAT…IVMW). Position 219 (E219) interacts with Zn(2+).

It belongs to the peptidase M48B family. The cofactor is Zn(2+).

It is found in the cell inner membrane. The protein is Protease HtpX of Ectopseudomonas mendocina (strain ymp) (Pseudomonas mendocina).